The following is a 675-amino-acid chain: Glycerophosphocholine phosphodiesterase GPCPD1 (675 aa).

Positions 1–115 (MTPSQVTFEI…IIIDDGQFGI (115 aa)) constitute a CBM20 domain. Substrate-binding positions include arginine 70 and 88-89 (HK). A phosphoserine mark is found at serine 178 and serine 427. Residues 321 to 621 (PLDVGHRGAG…DRIYDWMPEQ (301 aa)) enclose the GP-PDE domain. Tyrosine 611 carries the phosphotyrosine modification.

This sequence belongs to the glycerophosphoryl diester phosphodiesterase family. As to expression, widely expressed with highest levels in skeletal muscle and heart.

The protein localises to the cytoplasm. Its subcellular location is the cytosol. The catalysed reaction is sn-glycerol 3-phosphocholine + H2O = sn-glycerol 3-phosphate + choline + H(+). Functionally, may be involved in the negative regulation of skeletal muscle differentiation, independently of its glycerophosphocholine phosphodiesterase activity. This chain is Glycerophosphocholine phosphodiesterase GPCPD1 (Gpcpd1), found in Mus musculus (Mouse).